We begin with the raw amino-acid sequence, 566 residues long: MSIKRAQLGGTTKHIFVTGGVVSSLGKGLTAASLGNLLTARGLRVVMQKLDPYLNVDPGTMNPFQHGEVFVTDDGAETDLDIGHYERFLDINLGQSANVTTGQIYSNVIAKERRGEYLGDTVQVIPHITDEIKRRMRLQAQPGPDGDPAPDVIITEIGGTVGDIESQPFIESARQVRHELGRKNCFFVHVSLVPFMNASGEQKTKPTQHSVAALRSIGIQPDALVLRSDRPVSEPNKRKIALMCDVDEAAVVNAVDVPSIYDIPSMLHDQGLDAYIIDQLGLTQAADVDWAGWSRLLEAVHDPKHTVTIGLVGKYIDLPDAYLSVTEALCSGGFAHDAKVALKWIASDECQTADGAAAQLSDVDGICVPGGFGVRGIEGKLGALRFARENGIPALGLCLGLQCMVIEYARNEAGLAGASSSEFDPDTAFPVIATMAEQVDIIAGGDLGGTMRLGLYPAALAGGSIVAELYGAAEVSERHRHRYEVNKAYRAQIADAGLWFSGTSPDGHLVECVELPRDVHPFYVGTQAHPELRSRPNRAHPLFAGLIGAALDRQKASLLFDVAADA.

The interval 1-282 (MSIKRAQLGG…DAYIIDQLGL (282 aa)) is amidoligase domain. Residue Ser23 coordinates CTP. A UTP-binding site is contributed by Ser23. ATP-binding positions include 24–29 (SLGKGL) and Asp81. Mg(2+)-binding residues include Asp81 and Glu156. CTP-binding positions include 163-165 (DIE), 203-208 (KTKPTQ), and Lys239. UTP is bound by residues 203–208 (KTKPTQ) and Lys239. The region spanning 308–556 (TIGLVGKYID…IGAALDRQKA (249 aa)) is the Glutamine amidotransferase type-1 domain. Gly371 contacts L-glutamine. The Nucleophile; for glutamine hydrolysis role is filled by Cys398. L-glutamine is bound by residues 399 to 402 (LGLQ), Glu422, and Arg482. Residues His529 and Glu531 contribute to the active site.

It belongs to the CTP synthase family. Homotetramer.

The enzyme catalyses UTP + L-glutamine + ATP + H2O = CTP + L-glutamate + ADP + phosphate + 2 H(+). It carries out the reaction L-glutamine + H2O = L-glutamate + NH4(+). The catalysed reaction is UTP + NH4(+) + ATP = CTP + ADP + phosphate + 2 H(+). It participates in pyrimidine metabolism; CTP biosynthesis via de novo pathway; CTP from UDP: step 2/2. Its activity is regulated as follows. Allosterically activated by GTP, when glutamine is the substrate; GTP has no effect on the reaction when ammonia is the substrate. The allosteric effector GTP functions by stabilizing the protein conformation that binds the tetrahedral intermediate(s) formed during glutamine hydrolysis. Inhibited by the product CTP, via allosteric rather than competitive inhibition. Catalyzes the ATP-dependent amination of UTP to CTP with either L-glutamine or ammonia as the source of nitrogen. Regulates intracellular CTP levels through interactions with the four ribonucleotide triphosphates. The protein is CTP synthase of Leifsonia xyli subsp. xyli (strain CTCB07).